The chain runs to 787 residues: Protein translocase subunit SecA 2 (787 aa).

Residues Gln-86, 104-108 (GEGKT), and Asp-493 contribute to the ATP site.

The protein belongs to the SecA family. As to quaternary structure, monomer and homodimer. Part of the essential Sec protein translocation apparatus which comprises SecA, SecYEG and auxiliary proteins SecDF. Other proteins may also be involved.

The protein localises to the cell membrane. It is found in the cytoplasm. It carries out the reaction ATP + H2O + cellular proteinSide 1 = ADP + phosphate + cellular proteinSide 2.. In terms of biological role, part of the Sec protein translocase complex. Interacts with the SecYEG preprotein conducting channel. Has a central role in coupling the hydrolysis of ATP to the transfer of proteins into and across the cell membrane, serving as an ATP-driven molecular motor driving the stepwise translocation of polypeptide chains across the membrane. In Bacillus thuringiensis subsp. konkukian (strain 97-27), this protein is Protein translocase subunit SecA 2.